A 152-amino-acid polypeptide reads, in one-letter code: Xanthine-guanine phosphoribosyltransferase (152 aa).

5-phospho-alpha-D-ribose 1-diphosphate is bound by residues 37–38 (RG), arginine 69, and 88–96 (DDLVDTGVT). Arginine 69 provides a ligand contact to GMP. Aspartate 89 contacts Mg(2+). Residues aspartate 92 and isoleucine 135 each coordinate guanine. The xanthine site is built by aspartate 92 and isoleucine 135. GMP is bound by residues 92–96 (DTGVT) and 134–135 (WI).

This sequence belongs to the purine/pyrimidine phosphoribosyltransferase family. XGPT subfamily. In terms of assembly, homotetramer. Mg(2+) is required as a cofactor.

The protein resides in the cell inner membrane. It catalyses the reaction GMP + diphosphate = guanine + 5-phospho-alpha-D-ribose 1-diphosphate. The enzyme catalyses XMP + diphosphate = xanthine + 5-phospho-alpha-D-ribose 1-diphosphate. The catalysed reaction is IMP + diphosphate = hypoxanthine + 5-phospho-alpha-D-ribose 1-diphosphate. The protein operates within purine metabolism; GMP biosynthesis via salvage pathway; GMP from guanine: step 1/1. Its pathway is purine metabolism; XMP biosynthesis via salvage pathway; XMP from xanthine: step 1/1. Its function is as follows. Purine salvage pathway enzyme that catalyzes the transfer of the ribosyl-5-phosphate group from 5-phospho-alpha-D-ribose 1-diphosphate (PRPP) to the N9 position of the 6-oxopurines guanine and xanthine to form the corresponding ribonucleotides GMP (guanosine 5'-monophosphate) and XMP (xanthosine 5'-monophosphate), with the release of PPi. To a lesser extent, also acts on hypoxanthine. This chain is Xanthine-guanine phosphoribosyltransferase, found in Sodalis glossinidius (strain morsitans).